Reading from the N-terminus, the 596-residue chain is NADH-quinone oxidoreductase subunit C/D (596 aa).

Positions Met-1 to Gln-186 are NADH dehydrogenase I subunit C. The segment at Asp-210–Arg-596 is NADH dehydrogenase I subunit D.

It in the N-terminal section; belongs to the complex I 30 kDa subunit family. In the C-terminal section; belongs to the complex I 49 kDa subunit family. As to quaternary structure, NDH-1 is composed of 13 different subunits. Subunits NuoB, CD, E, F, and G constitute the peripheral sector of the complex.

Its subcellular location is the cell inner membrane. The enzyme catalyses a quinone + NADH + 5 H(+)(in) = a quinol + NAD(+) + 4 H(+)(out). Its function is as follows. NDH-1 shuttles electrons from NADH, via FMN and iron-sulfur (Fe-S) centers, to quinones in the respiratory chain. The immediate electron acceptor for the enzyme in this species is believed to be ubiquinone. Couples the redox reaction to proton translocation (for every two electrons transferred, four hydrogen ions are translocated across the cytoplasmic membrane), and thus conserves the redox energy in a proton gradient. This is NADH-quinone oxidoreductase subunit C/D from Shigella flexneri serotype 5b (strain 8401).